Consider the following 104-residue polypeptide: Flagellar hook-basal body complex protein FliE (104 aa).

The protein belongs to the FliE family.

The protein resides in the bacterial flagellum basal body. In Salmonella arizonae (strain ATCC BAA-731 / CDC346-86 / RSK2980), this protein is Flagellar hook-basal body complex protein FliE.